We begin with the raw amino-acid sequence, 2724 residues long: Eukaryotic translation initiation factor 2-alpha kinase 2 (2724 aa).

Residues 1-24 (MLNMVDQKKGINNGSSTGVINNIN) are Cytoplasmic-facing. Residues 25–45 (GKIKNEFIFMYLIAAGGFSCV) form a helical membrane-spanning segment. Topologically, residues 46-673 (YKIKKKKSNK…KFYIKRHNQK (628 aa)) are extracellular. Positions 112–153 (KRERRGRRKEQQREQMGDKRREKRQQQRREKRKEQNTNTKKR) are disordered. Positions 120-146 (KEQQREQMGDKRREKRQQQRREKRKEQ) are enriched in basic and acidic residues. The chain crosses the membrane as a helical span at residues 674–694 (TYFFENIIFYHYIIMLFLDIE). Over 695-718 (KYKNKFVSLFQYNLYRKLLKISKR) the chain is Cytoplasmic. The helical transmembrane segment at 719 to 739 (IVLMLHRIETNVICIFLLKHF) threads the bilayer. The Extracellular portion of the chain corresponds to 740–800 (EDYFIRKGIH…KKNIFNFFIE (61 aa)). A helical membrane pass occupies residues 801–821 (LFLNNIQINIFKKFEILYLII). Topologically, residues 822-832 (YFYNYFEKSKQ) are cytoplasmic. A helical transmembrane segment spans residues 833–853 (FDIEGIGDIIYVWLSLINLFY). Residues 854 to 876 (DDKGKCIKILSKIFAKLNKKLYY) lie on the Extracellular side of the membrane. A helical membrane pass occupies residues 877-897 (VYWGKLYIIMNWTTIVDTIFI). The Cytoplasmic portion of the chain corresponds to 898-908 (RNVLSINREGN). Residues 909 to 929 (YYWVIIVLKMINYFVNVAYTL) traverse the membrane as a helical segment. The Extracellular portion of the chain corresponds to 930-996 (TRMDIFFIKV…KKNYDIYTKY (67 aa)). The chain crosses the membrane as a helical span at residues 997-1017 (AILFIYCFIIQAYYFDTLFNI). At 1018-2724 (RSLESNEIAN…GDIFLPDKCP (1707 aa)) the chain is on the cytoplasmic side. K2029 serves as a coordination point for ATP. Positions 2084-2719 (KHYFTKCGIL…KIISAGDIFL (636 aa)) constitute a Protein kinase domain. Positions 2120-2155 (INTLNEENQNMFCKNKEKKEENYKKIDTNISQFSEK) form a coiled coil. The active-site Proton acceptor is the D2229. Residues 2479–2507 (EKMDKNKIAAQKKKKKKENKHPIGRRSTN) form a disordered region. The segment covering 2488 to 2502 (AQKKKKKKENKHPIG) has biased composition (basic residues).

The protein belongs to the protein kinase superfamily. Ser/Thr protein kinase family. GCN2 subfamily. Auto-phosphorylated.

Its subcellular location is the membrane. It carries out the reaction L-seryl-[protein] + ATP = O-phospho-L-seryl-[protein] + ADP + H(+). The enzyme catalyses L-threonyl-[protein] + ATP = O-phospho-L-threonyl-[protein] + ADP + H(+). In terms of biological role, phosphorylates translation factor eIF2alpha in salivary gland sporozoites during dormancy, which leads to an inhibition of protein translation and accumulation of stalled mRNAs into granules. This is Eukaryotic translation initiation factor 2-alpha kinase 2 from Plasmodium berghei (strain Anka).